Reading from the N-terminus, the 174-residue chain is Ribosome maturation factor RimM (174 aa).

In terms of domain architecture, PRC barrel spans 97 to 169 (GNKFYFHEVI…KVVMDLPEGL (73 aa)).

This sequence belongs to the RimM family. In terms of assembly, binds ribosomal protein uS19.

Its subcellular location is the cytoplasm. In terms of biological role, an accessory protein needed during the final step in the assembly of 30S ribosomal subunit, possibly for assembly of the head region. Essential for efficient processing of 16S rRNA. May be needed both before and after RbfA during the maturation of 16S rRNA. It has affinity for free ribosomal 30S subunits but not for 70S ribosomes. This chain is Ribosome maturation factor RimM, found in Flavobacterium psychrophilum (strain ATCC 49511 / DSM 21280 / CIP 103535 / JIP02/86).